The primary structure comprises 612 residues: Dihydroxy-acid dehydratase (612 aa).

Asp81 serves as a coordination point for Mg(2+). Cys122 contacts [2Fe-2S] cluster. Asp123 and Lys124 together coordinate Mg(2+). Lys124 is subject to N6-carboxylysine. Cys195 provides a ligand contact to [2Fe-2S] cluster. Residue Glu491 coordinates Mg(2+). The Proton acceptor role is filled by Ser517.

The protein belongs to the IlvD/Edd family. In terms of assembly, homodimer. The cofactor is [2Fe-2S] cluster. It depends on Mg(2+) as a cofactor.

The enzyme catalyses (2R)-2,3-dihydroxy-3-methylbutanoate = 3-methyl-2-oxobutanoate + H2O. It catalyses the reaction (2R,3R)-2,3-dihydroxy-3-methylpentanoate = (S)-3-methyl-2-oxopentanoate + H2O. Its pathway is amino-acid biosynthesis; L-isoleucine biosynthesis; L-isoleucine from 2-oxobutanoate: step 3/4. It participates in amino-acid biosynthesis; L-valine biosynthesis; L-valine from pyruvate: step 3/4. Its function is as follows. Functions in the biosynthesis of branched-chain amino acids. Catalyzes the dehydration of (2R,3R)-2,3-dihydroxy-3-methylpentanoate (2,3-dihydroxy-3-methylvalerate) into 2-oxo-3-methylpentanoate (2-oxo-3-methylvalerate) and of (2R)-2,3-dihydroxy-3-methylbutanoate (2,3-dihydroxyisovalerate) into 2-oxo-3-methylbutanoate (2-oxoisovalerate), the penultimate precursor to L-isoleucine and L-valine, respectively. The chain is Dihydroxy-acid dehydratase from Sinorhizobium medicae (strain WSM419) (Ensifer medicae).